The chain runs to 288 residues: ATP phosphoribosyltransferase (288 aa).

The protein belongs to the ATP phosphoribosyltransferase family. Long subfamily. The cofactor is Mg(2+).

The protein resides in the cytoplasm. It carries out the reaction 1-(5-phospho-beta-D-ribosyl)-ATP + diphosphate = 5-phospho-alpha-D-ribose 1-diphosphate + ATP. It functions in the pathway amino-acid biosynthesis; L-histidine biosynthesis; L-histidine from 5-phospho-alpha-D-ribose 1-diphosphate: step 1/9. Feedback inhibited by histidine. In terms of biological role, catalyzes the condensation of ATP and 5-phosphoribose 1-diphosphate to form N'-(5'-phosphoribosyl)-ATP (PR-ATP). Has a crucial role in the pathway because the rate of histidine biosynthesis seems to be controlled primarily by regulation of HisG enzymatic activity. This Methanococcus maripaludis (strain C6 / ATCC BAA-1332) protein is ATP phosphoribosyltransferase.